Reading from the N-terminus, the 321-residue chain is tRNA(Ile)-lysidine synthase (321 aa).

Position 30–35 (30–35 (SGGSDS)) interacts with ATP.

The protein belongs to the tRNA(Ile)-lysidine synthase family.

The protein resides in the cytoplasm. The enzyme catalyses cytidine(34) in tRNA(Ile2) + L-lysine + ATP = lysidine(34) in tRNA(Ile2) + AMP + diphosphate + H(+). Its function is as follows. Ligates lysine onto the cytidine present at position 34 of the AUA codon-specific tRNA(Ile) that contains the anticodon CAU, in an ATP-dependent manner. Cytidine is converted to lysidine, thus changing the amino acid specificity of the tRNA from methionine to isoleucine. The protein is tRNA(Ile)-lysidine synthase of Chlamydia trachomatis serovar L2 (strain ATCC VR-902B / DSM 19102 / 434/Bu).